The following is a 231-amino-acid chain: Thymidylate kinase (231 aa).

10 to 17 (GGEGAGKT) is an ATP binding site.

This sequence belongs to the thymidylate kinase family.

The catalysed reaction is dTMP + ATP = dTDP + ADP. Its function is as follows. Phosphorylation of dTMP to form dTDP in both de novo and salvage pathways of dTTP synthesis. This Acaryochloris marina (strain MBIC 11017) protein is Thymidylate kinase.